A 22-amino-acid polypeptide reads, in one-letter code: uncharacterized protein (22 aa).

A disordered region spans residues 1–22; that stretch reads MHNSIAYDKDGNSTGQKYYAYG.

This is an uncharacterized protein from Lactobacillus helveticus (Lactobacillus suntoryeus).